The following is a 162-amino-acid chain: NADH-quinone oxidoreductase subunit I (162 aa).

4Fe-4S ferredoxin-type domains follow at residues 53 to 83 (LRRYPNGEERCIACKLCEAICPALAITIEAE) and 93 to 122 (TRYDIDLTKCIFCGFCEEACPVDAVVETRI). Positions 63, 66, 69, 73, 102, 105, 108, and 112 each coordinate [4Fe-4S] cluster.

It belongs to the complex I 23 kDa subunit family. In terms of assembly, NDH-1 is composed of 14 different subunits. Subunits NuoA, H, J, K, L, M, N constitute the membrane sector of the complex. Requires [4Fe-4S] cluster as cofactor.

It is found in the cell inner membrane. The enzyme catalyses a quinone + NADH + 5 H(+)(in) = a quinol + NAD(+) + 4 H(+)(out). Its function is as follows. NDH-1 shuttles electrons from NADH, via FMN and iron-sulfur (Fe-S) centers, to quinones in the respiratory chain. The immediate electron acceptor for the enzyme in this species is believed to be ubiquinone. Couples the redox reaction to proton translocation (for every two electrons transferred, four hydrogen ions are translocated across the cytoplasmic membrane), and thus conserves the redox energy in a proton gradient. The sequence is that of NADH-quinone oxidoreductase subunit I from Dechloromonas aromatica (strain RCB).